The following is a 266-amino-acid chain: Short-chain dehydrogenase/reductase AacuF (266 aa).

3 residues coordinate NADP(+): Leu-13, Asp-57, and Asn-85. Active-site proton donor residues include Ser-145 and Tyr-164. NADP(+) contacts are provided by Tyr-164, Lys-168, and Val-198. Lys-168 serves as the catalytic Lowers pKa of active site Tyr.

Belongs to the short-chain dehydrogenases/reductases (SDR) family.

Its pathway is secondary metabolite biosynthesis. In terms of biological role, short-chain dehydrogenase/reductase; part of the gene cluster that mediates the biosynthesis of the tetrahydroxanthone dimer secalonic acid D. The pathway begins with the synthesis of atrochrysone thioester by the polyketide synthase AacuL. The atrochrysone carboxyl ACP thioesterase AacuM then breaks the thioester bond and releases the atrochrysone carboxylic acid from AacuL. Atrochrysone carboxylic acid is decarboxylated by the decarboxylase AacuI, and oxidized by the anthrone oxygenase AacuG to yield emodin. Emodin is then reduced to emodin hydroquinone by a yet unidentified oxidoreductase. A-ring reduction by the short chain dehydrogenase AacuN, dehydration by the scytalone dehydratase-like protein AacuK and probable spontaneous re-oxidation, results in overall deoxygenation to chrysophanol. Baeyer-Villiger oxidation by the Baeyer-Villiger monooxygenase (BVMO) AacuH then yields monodictyphenone. Monodictyphenone is transformed into compounds with the tetrahydroxanthone skeleton via methylesterification by the methyltransferase AacuQ, followed by the action of the flavin-dependent monooxygenase AacuC, the isomerase AacuP, and the short chain dehydrogenase/reductase AacuF or AacuD. AacuF and AacuD should accept the same compound as a substrate but perform the ketoreduction with a different stereoselectivity, thus yielding blennolides B and A, respectively. In the final step of the biosynthesis, the cytochrome P450 monooxygenase AacuE accepts blennolide B and/or blennolide A to conduct the dimerization reaction to furnish the tetrahydroxanthone dimers, secalonic acids D, B, and F. This Aspergillus aculeatus (strain ATCC 16872 / CBS 172.66 / WB 5094) protein is Short-chain dehydrogenase/reductase AacuF.